A 354-amino-acid polypeptide reads, in one-letter code: MNGTEGPYFYVPMVNTTGIVRSPYEYPQYYLVSPAAYACLGAYMFFLILVGFPINFLTLYVTIEHKKLRTPLNYILLNLAVADLFMVFGGFTTTIYTSMHGYFVLGRLGCNLEGYFATLGGEIGLWSLVVLAVERWLVVCKPISNFRFSENHAIMGLVFTWIMANSCAAPPLLGWSRYIPEGMQCSCGVDYYTRAEGFNNESFVIYMFICHFCIPLIVVFFCYGRLLCAVKEAAAAQQESETTQRAEREVTRMVVIMVIGFLVCWIPYASVAWYIFTHQGSEFGPLFMTVPAFFAKSASIYNPLIYICMNKQFRHCMITTLCCGKNPFEEEEGASTTASKTEASSVSSSSVSPA.

Residues 1 to 36 (MNGTEGPYFYVPMVNTTGIVRSPYEYPQYYLVSPAA) lie on the Extracellular side of the membrane. N-linked (GlcNAc...) asparagine glycosylation is found at Asn2 and Asn15. A helical transmembrane segment spans residues 37 to 61 (YACLGAYMFFLILVGFPINFLTLYV). At 62–73 (TIEHKKLRTPLN) the chain is on the cytoplasmic side. The helical transmembrane segment at 74–96 (YILLNLAVADLFMVFGGFTTTIY) threads the bilayer. The Extracellular segment spans residues 97–110 (TSMHGYFVLGRLGC). The cysteines at positions 110 and 187 are disulfide-linked. A helical transmembrane segment spans residues 111–133 (NLEGYFATLGGEIGLWSLVVLAV). The short motif at 134 to 136 (ERW) is the 'Ionic lock' involved in activated form stabilization element. Over 134–152 (ERWLVVCKPISNFRFSENH) the chain is Cytoplasmic. A helical membrane pass occupies residues 153–173 (AIMGLVFTWIMANSCAAPPLL). The Extracellular segment spans residues 174 to 202 (GWSRYIPEGMQCSCGVDYYTRAEGFNNES). A helical membrane pass occupies residues 203 to 224 (FVIYMFICHFCIPLIVVFFCYG). At 225–252 (RLLCAVKEAAAAQQESETTQRAEREVTR) the chain is on the cytoplasmic side. The helical transmembrane segment at 253 to 274 (MVVIMVIGFLVCWIPYASVAWY) threads the bilayer. Over 275–286 (IFTHQGSEFGPL) the chain is Extracellular. The helical transmembrane segment at 287 to 308 (FMTVPAFFAKSASIYNPLIYIC) threads the bilayer. Lys296 carries the post-translational modification N6-(retinylidene)lysine. At 309 to 354 (MNKQFRHCMITTLCCGKNPFEEEEGASTTASKTEASSVSSSSVSPA) the chain is on the cytoplasmic side. 2 S-palmitoyl cysteine lipidation sites follow: Cys322 and Cys323. The tract at residues 333-354 (GASTTASKTEASSVSSSSVSPA) is disordered. Positions 334 to 354 (ASTTASKTEASSVSSSSVSPA) are enriched in low complexity.

The protein belongs to the G-protein coupled receptor 1 family. Opsin subfamily. Post-translationally, phosphorylated on some or all of the serine and threonine residues present in the C-terminal region. Contains one covalently linked retinal chromophore.

The protein resides in the membrane. It is found in the cell projection. It localises to the cilium. The protein localises to the photoreceptor outer segment. In terms of biological role, photoreceptor required for image-forming vision at low light intensity. While most salt water fish species use retinal as chromophore, most freshwater fish use 3-dehydroretinal, or a mixture of retinal and 3-dehydroretinal. Light-induced isomerization of 11-cis to all-trans retinal triggers a conformational change that activates signaling via G-proteins. Subsequent receptor phosphorylation mediates displacement of the bound G-protein alpha subunit by arrestin and terminates signaling. This is Rhodopsin (rho) from Poecilia reticulata (Guppy).